The following is a 142-amino-acid chain: Large ribosomal subunit protein uL11 (142 aa).

It belongs to the universal ribosomal protein uL11 family. As to quaternary structure, part of the ribosomal stalk of the 50S ribosomal subunit. Interacts with L10 and the large rRNA to form the base of the stalk. L10 forms an elongated spine to which L12 dimers bind in a sequential fashion forming a multimeric L10(L12)X complex. In terms of processing, one or more lysine residues are methylated.

Functionally, forms part of the ribosomal stalk which helps the ribosome interact with GTP-bound translation factors. This Pseudoalteromonas translucida (strain TAC 125) protein is Large ribosomal subunit protein uL11.